Here is a 243-residue protein sequence, read N- to C-terminus: Segregation and condensation protein A (243 aa).

This sequence belongs to the ScpA family. Component of a cohesin-like complex composed of ScpA, ScpB and the Smc homodimer, in which ScpA and ScpB bind to the head domain of Smc. The presence of the three proteins is required for the association of the complex with DNA.

It localises to the cytoplasm. Participates in chromosomal partition during cell division. May act via the formation of a condensin-like complex containing Smc and ScpB that pull DNA away from mid-cell into both cell halves. This is Segregation and condensation protein A from Staphylococcus aureus (strain NCTC 8325 / PS 47).